A 276-amino-acid polypeptide reads, in one-letter code: Omega-amidase NIT2-A (276 aa).

In terms of domain architecture, CN hydrolase spans 4–248 (FKLSLVQFLV…ETVLSAEIDL (245 aa)). Catalysis depends on glutamate 43, which acts as the Proton acceptor. Catalysis depends on lysine 112, which acts as the Proton donor. The Nucleophile role is filled by cysteine 153.

It belongs to the carbon-nitrogen hydrolase superfamily. NIT1/NIT2 family. Homodimer.

Its subcellular location is the cytoplasm. The catalysed reaction is 2-oxoglutaramate + H2O = 2-oxoglutarate + NH4(+). It carries out the reaction 2-oxosuccinamate + H2O = oxaloacetate + NH4(+). Functionally, has omega-amidase activity. The role of omega-amidase is to remove potentially toxic intermediates by converting 2-oxoglutaramate and 2-oxosuccinamate to biologically useful 2-oxoglutarate and oxaloacetate, respectively. This is Omega-amidase NIT2-A (nit2a) from Xenopus laevis (African clawed frog).